The primary structure comprises 195 residues: Molybdenum cofactor guanylyltransferase (195 aa).

Residues 10–12 (LAG), Lys-23, Asn-51, Asp-69, and Asp-99 contribute to the GTP site. Asp-99 lines the Mg(2+) pocket.

This sequence belongs to the MobA family. In terms of assembly, monomer. It depends on Mg(2+) as a cofactor.

It is found in the cytoplasm. The catalysed reaction is Mo-molybdopterin + GTP + H(+) = Mo-molybdopterin guanine dinucleotide + diphosphate. Its function is as follows. Transfers a GMP moiety from GTP to Mo-molybdopterin (Mo-MPT) cofactor (Moco or molybdenum cofactor) to form Mo-molybdopterin guanine dinucleotide (Mo-MGD) cofactor. The sequence is that of Molybdenum cofactor guanylyltransferase from Yersinia pestis bv. Antiqua (strain Antiqua).